We begin with the raw amino-acid sequence, 285 residues long: Polyamine aminopropyltransferase (285 aa).

One can recognise a PABS domain in the interval 5-241; the sequence is QDWFTESYPD…GWWSATMAGK (237 aa). Residue Gln-35 participates in S-methyl-5'-thioadenosine binding. The spermidine site is built by His-66 and Asp-90. S-methyl-5'-thioadenosine-binding positions include Asp-110 and 141–142; that span reads DG. The active-site Proton acceptor is the Asp-160. 160 to 163 lines the spermidine pocket; the sequence is DSTD. Pro-167 is an S-methyl-5'-thioadenosine binding site.

It belongs to the spermidine/spermine synthase family. Homodimer or homotetramer.

The protein resides in the cytoplasm. It carries out the reaction S-adenosyl 3-(methylsulfanyl)propylamine + putrescine = S-methyl-5'-thioadenosine + spermidine + H(+). It functions in the pathway amine and polyamine biosynthesis; spermidine biosynthesis; spermidine from putrescine: step 1/1. Its function is as follows. Catalyzes the irreversible transfer of a propylamine group from the amino donor S-adenosylmethioninamine (decarboxy-AdoMet) to putrescine (1,4-diaminobutane) to yield spermidine. This chain is Polyamine aminopropyltransferase, found in Methylococcus capsulatus (strain ATCC 33009 / NCIMB 11132 / Bath).